We begin with the raw amino-acid sequence, 136 residues long: S-protein homolog 17 (136 aa).

An N-terminal signal peptide occupies residues 1 to 22; sequence MKNLSIFMFVFSLCMFGHVSRA.

Belongs to the plant self-incompatibility (S1) protein family.

The protein localises to the secreted. The sequence is that of S-protein homolog 17 from Arabidopsis thaliana (Mouse-ear cress).